The sequence spans 529 residues: Peptide chain release factor 3 (529 aa).

One can recognise a tr-type G domain in the interval 11-280 (SKRRTFAIIS…GLTDWAPAPL (270 aa)). Residues 20–27 (SHPDAGKT), 88–92 (DTPGH), and 142–145 (NKLD) contribute to the GTP site.

This sequence belongs to the TRAFAC class translation factor GTPase superfamily. Classic translation factor GTPase family. PrfC subfamily.

The protein resides in the cytoplasm. In terms of biological role, increases the formation of ribosomal termination complexes and stimulates activities of RF-1 and RF-2. It binds guanine nucleotides and has strong preference for UGA stop codons. It may interact directly with the ribosome. The stimulation of RF-1 and RF-2 is significantly reduced by GTP and GDP, but not by GMP. This chain is Peptide chain release factor 3, found in Vibrio vulnificus (strain YJ016).